Consider the following 725-residue polypeptide: uncharacterized protein (725 aa).

A FtsK domain is found at 363 to 556 (GTYVEIPLYS…FVTTRPEDSC (194 aa)). ATP is bound at residue 382-389 (GRTRGGKS).

This sequence belongs to the FtsK/SpoIIIE/SftA family.

In terms of biological role, probable DNA motor protein. May track DNA in a ATP-dependent manner by generating positive supercoils in front of it and negative supercoils behind it. This is an uncharacterized protein from Nostoc sp. (strain PCC 7120 / SAG 25.82 / UTEX 2576).